Consider the following 1755-residue polypeptide: Transposon Ty1-PL Gag-Pol polyprotein (1755 aa).

Polar residues-rich tracts occupy residues 1–23 (MESQ…SVTS), 48–60 (TKAN…TPAS), and 127–152 (QSQF…GNTF). Disordered regions lie at residues 1 to 93 (MESQ…MMTQ), 126 to 174 (PQSQ…PPPM), and 352 to 421 (GSRN…SKST). Over residues 153–165 (TDSSSADSDMTST) the composition is skewed to low complexity. Positions 299–401 (NNGIHINNKV…NSKSKTARAH (103 aa)) are RNA-binding. The segment covering 402–418 (NVSTSNNSPSTDNDSIS) has biased composition (low complexity). Ser416 carries the post-translational modification Phosphoserine. The For protease activity; shared with dimeric partner role is filled by Asp461. The segment at 583–640 (NVHTSESTRKYPYPFIHRMLAHANAQTIRYSLKNNTITYFNESDVDWSSAIDYQCPDC) is integrase-type zinc finger-like. Positions 660-835 (NSYEPFQYLH…AGLDISTLLP (176 aa)) constitute an Integrase catalytic domain. Residues Asp671 and Asp736 each coordinate Mg(2+). Disordered regions lie at residues 956–1087 (SKAV…ETEK), 1092–1111 (RSPS…NIVP), and 1130–1187 (DLPL…DNET). Positions 960–969 (SPTDSTPPST) are enriched in low complexity. Residues 1005 to 1015 (STPQISNIEST) show a composition bias toward polar residues. Residues 1038 to 1053 (ESSHASKSKDFRHSDS) show a composition bias toward basic and acidic residues. Composition is skewed to polar residues over residues 1054–1082 (YSEN…QISD) and 1101–1111 (PENNSSHNIVP). Residues 1178–1212 (KKRSLEDNETEIKVSRDTWNTKNMRSLEPPRSKKR) carry the Bipartite nuclear localization signal motif. Residues 1338 to 1476 (NNYYITQLDI…DILGLEIKYQ (139 aa)) form the Reverse transcriptase Ty1/copia-type domain. 6 residues coordinate Mg(2+): Asp1346, Asp1427, Asp1428, Asp1610, Glu1652, and Asp1685. Residues 1610 to 1752 (DASYGNQPYY…IKTFKLLTNK (143 aa)) enclose the RNase H Ty1/copia-type domain.

The capsid protein forms a homotrimer, from which the VLPs are assembled. The protease is a homodimer, whose active site consists of two apposed aspartic acid residues. Post-translationally, initially, virus-like particles (VLPs) are composed of the structural unprocessed proteins Gag and Gag-Pol, and also contain the host initiator methionine tRNA (tRNA(i)-Met) which serves as a primer for minus-strand DNA synthesis, and a dimer of genomic Ty RNA. Processing of the polyproteins occurs within the particle and proceeds by an ordered pathway, called maturation. First, the protease (PR) is released by autocatalytic cleavage of the Gag-Pol polyprotein yielding capsid protein p45 and a Pol-p154 precursor protein. This cleavage is a prerequisite for subsequent processing of Pol-p154 at the remaining sites to release the mature structural and catalytic proteins. Maturation takes place prior to the RT reaction and is required to produce transposition-competent VLPs.

It localises to the cytoplasm. It is found in the nucleus. The enzyme catalyses DNA(n) + a 2'-deoxyribonucleoside 5'-triphosphate = DNA(n+1) + diphosphate. It carries out the reaction Endonucleolytic cleavage to 5'-phosphomonoester.. Capsid protein (CA) is the structural component of the virus-like particle (VLP), forming the shell that encapsulates the retrotransposons dimeric RNA genome. The particles are assembled from trimer-clustered units and there are holes in the capsid shells that allow for the diffusion of macromolecules. CA also has nucleocapsid-like chaperone activity, promoting primer tRNA(i)-Met annealing to the multipartite primer-binding site (PBS), dimerization of Ty1 RNA and initiation of reverse transcription. Functionally, the aspartyl protease (PR) mediates the proteolytic cleavages of the Gag and Gag-Pol polyproteins after assembly of the VLP. In terms of biological role, reverse transcriptase/ribonuclease H (RT) is a multifunctional enzyme that catalyzes the conversion of the retro-elements RNA genome into dsDNA within the VLP. The enzyme displays a DNA polymerase activity that can copy either DNA or RNA templates, and a ribonuclease H (RNase H) activity that cleaves the RNA strand of RNA-DNA heteroduplexes during plus-strand synthesis and hydrolyzes RNA primers. The conversion leads to a linear dsDNA copy of the retrotransposon that includes long terminal repeats (LTRs) at both ends. Its function is as follows. Integrase (IN) targets the VLP to the nucleus, where a subparticle preintegration complex (PIC) containing at least integrase and the newly synthesized dsDNA copy of the retrotransposon must transit the nuclear membrane. Once in the nucleus, integrase performs the integration of the dsDNA into the host genome. This Saccharomyces cerevisiae (strain ATCC 204508 / S288c) (Baker's yeast) protein is Transposon Ty1-PL Gag-Pol polyprotein (TY1B-PL).